The sequence spans 129 residues: Lysozyme C, milk isozyme (129 aa).

The 129-residue stretch at 1 to 129 folds into the C-type lysozyme domain; it reads KIFSKCELAR…LSKYLASCNL (129 aa). 4 cysteine pairs are disulfide-bonded: Cys-6/Cys-127, Cys-30/Cys-115, Cys-65/Cys-80, and Cys-76/Cys-94. Residues Glu-35 and Asp-53 contribute to the active site. Ca(2+) contacts are provided by Lys-82, Asp-85, Asn-87, Asp-90, and Asp-91.

It belongs to the glycosyl hydrolase 22 family. As to quaternary structure, monomer. Ca(2+) is required as a cofactor.

It catalyses the reaction Hydrolysis of (1-&gt;4)-beta-linkages between N-acetylmuramic acid and N-acetyl-D-glucosamine residues in a peptidoglycan and between N-acetyl-D-glucosamine residues in chitodextrins.. Lysozymes have primarily a bacteriolytic function; those in tissues and body fluids are associated with the monocyte-macrophage system and enhance the activity of immunoagents. In Canis lupus familiaris (Dog), this protein is Lysozyme C, milk isozyme.